The chain runs to 804 residues: MSFDHQTIEKKWQDYWLKNKTFATREDKSKPKFYALDMFPYPSGAGLHVGHPEGYTATDILSRMKRMQGYNVLHPMGWDAFGLPAEQYALDTGNDPAVFTEQNIDNFRRQIRALGFSYDWDREVNTTDPDYYKWTQWIFLKLYEKGLAYVDEVPVNWCPALGTVLANEEVIDGKSERGGHPVERRPMKQWMLKITAYADRLLEDLEELDWPESIKEMQRNWIGRSEGAHVHFAVDGTNETFTVFTTRPDTLFGATYAVLAPEHDLVQKITTPEQKDAVNAYIEEVQSKSDLERTDLAKTKTGVFTGAYAVNPANGEKIPVWIADYVLATYGTGAVMAVPAHDERDHEFASAFGLPIKEVVKGGDVEKEAYTGDGEHIHSDFLNGLDKAAAIEKMIQWLEENGKGEKKVTYRLRDWLFSRQRYWGEPIPIIHWEDGTSTPVPEEELPLILPKTSEIKPSGTGESPLANIKEWVEVTDPETGKKGRRETNTMPQWAGSCWYFLRYIDPKNPNELASPEKLKEWLPVDMYIGGAEHAVLHLLYARFWHKFLYDIGVVPTKEPFKQLYNQGMILGENNEKMSKSKGNVVNPDEIVETHGADTLRLYEMFMGPLDASIAWSTTGLDGARRFLDRVWRLFIDDNGGLNEKIVEGAGETLERVYHETVMKVTDHFEGLRFNTGISQLMVFINEAYKADQLPKEYMEGFVKLLSPVAPHLAEELWNRLGHEETIAYEAWPVYDEAKLVDDEIEIVVQLNGKVKAKLNVPADADKEQLEELAKNNEKVKEQLEGKTIRKVIAVPGKLVNIVAN.

Residues 40–51 (PYPSGAGLHVGH) carry the 'HIGH' region motif. A 'KMSKS' region motif is present at residues 576 to 580 (KMSKS). Residue Lys579 coordinates ATP.

It belongs to the class-I aminoacyl-tRNA synthetase family.

Its subcellular location is the cytoplasm. The catalysed reaction is tRNA(Leu) + L-leucine + ATP = L-leucyl-tRNA(Leu) + AMP + diphosphate. The chain is Leucine--tRNA ligase from Bacillus licheniformis (strain ATCC 14580 / DSM 13 / JCM 2505 / CCUG 7422 / NBRC 12200 / NCIMB 9375 / NCTC 10341 / NRRL NRS-1264 / Gibson 46).